Consider the following 247-residue polypeptide: Triosephosphate isomerase (247 aa).

Positions 10 and 12 each coordinate substrate. The active-site Electrophile is histidine 94. Glutamate 164 serves as the catalytic Proton acceptor.

It belongs to the triosephosphate isomerase family. In terms of assembly, homodimer.

Its subcellular location is the cytoplasm. It catalyses the reaction D-glyceraldehyde 3-phosphate = dihydroxyacetone phosphate. The enzyme catalyses dihydroxyacetone phosphate = methylglyoxal + phosphate. Its pathway is carbohydrate biosynthesis; gluconeogenesis. It participates in carbohydrate degradation; glycolysis; D-glyceraldehyde 3-phosphate from glycerone phosphate: step 1/1. Its function is as follows. Triosephosphate isomerase is an extremely efficient metabolic enzyme that catalyzes the interconversion between dihydroxyacetone phosphate (DHAP) and D-glyceraldehyde-3-phosphate (G3P) in glycolysis and gluconeogenesis. Functionally, it is also responsible for the non-negligible production of methylglyoxal a reactive cytotoxic side-product that modifies and can alter proteins, DNA and lipids. This is Triosephosphate isomerase from Latimeria chalumnae (Coelacanth).